The following is a 544-amino-acid chain: Chaperonin GroEL (544 aa).

Residues 29 to 32, 86 to 90, Gly-413, 476 to 478, and Asp-492 contribute to the ATP site; these read TLGP, DGTTT, and NAA.

The protein belongs to the chaperonin (HSP60) family. Forms a cylinder of 14 subunits composed of two heptameric rings stacked back-to-back. Interacts with the co-chaperonin GroES.

The protein localises to the cytoplasm. It carries out the reaction ATP + H2O + a folded polypeptide = ADP + phosphate + an unfolded polypeptide.. Together with its co-chaperonin GroES, plays an essential role in assisting protein folding. The GroEL-GroES system forms a nano-cage that allows encapsulation of the non-native substrate proteins and provides a physical environment optimized to promote and accelerate protein folding. The polypeptide is Chaperonin GroEL (Bacillus velezensis (strain DSM 23117 / BGSC 10A6 / LMG 26770 / FZB42) (Bacillus amyloliquefaciens subsp. plantarum)).